The following is a 727-amino-acid chain: NADH-ubiquinone oxidoreductase 75 kDa subunit, mitochondrial (727 aa).

Residues 1–23 constitute a mitochondrion transit peptide; that stretch reads MLRIPVRKALVGLSKSSKGCVRT. The region spanning 30-108 is the 2Fe-2S ferredoxin-type domain; sequence NLIEVFVDGQ…GWNILTNSEK (79 aa). Residues Cys64, Cys75, and Cys78 each contribute to the [2Fe-2S] cluster site. Lys84 bears the N6-acetyllysine mark. Residue Cys92 participates in [2Fe-2S] cluster binding. The 4Fe-4S His(Cys)3-ligated-type domain occupies 108-147; sequence KTKKAREGVMEFLLANHPLDCPICDQGGECDLQDQSMMFG. His124, Cys128, Cys131, Cys137, Cys176, Cys179, Cys182, and Cys226 together coordinate [4Fe-4S] cluster. The 4Fe-4S Mo/W bis-MGD-type domain maps to 245 to 301; sequence TRKTESIDVMDAVGSNIVVSTRTGEVMRILPRMHEDINEEWISDKTRFAYDGLKRQR. An N6-acetyllysine mark is found at Lys499 and Lys709.

This sequence belongs to the complex I 75 kDa subunit family. In terms of assembly, core subunit of respiratory chain NADH dehydrogenase (Complex I) which is composed of 45 different subunits. This is the largest subunit of complex I and it is a component of the iron-sulfur (IP) fragment of the enzyme. Complex I associates with ubiquinol-cytochrome reductase complex (Complex III) to form supercomplexes. Interacts with MDM2 and AKAP1. It depends on [2Fe-2S] cluster as a cofactor. [4Fe-4S] cluster is required as a cofactor.

It localises to the mitochondrion inner membrane. The enzyme catalyses a ubiquinone + NADH + 5 H(+)(in) = a ubiquinol + NAD(+) + 4 H(+)(out). Its function is as follows. Core subunit of the mitochondrial membrane respiratory chain NADH dehydrogenase (Complex I) which catalyzes electron transfer from NADH through the respiratory chain, using ubiquinone as an electron acceptor. Essential for catalysing the entry and efficient transfer of electrons within complex I. Plays a key role in the assembly and stability of complex I and participates in the association of complex I with ubiquinol-cytochrome reductase complex (Complex III) to form supercomplexes. In Bos taurus (Bovine), this protein is NADH-ubiquinone oxidoreductase 75 kDa subunit, mitochondrial (NDUFS1).